A 228-amino-acid chain; its full sequence is NAD(P)H-quinone oxidoreductase subunit K, chloroplastic (228 aa).

Cys43, Cys44, Cys108, and Cys139 together coordinate [4Fe-4S] cluster.

Belongs to the complex I 20 kDa subunit family. As to quaternary structure, NDH is composed of at least 16 different subunits, 5 of which are encoded in the nucleus. It depends on [4Fe-4S] cluster as a cofactor.

Its subcellular location is the plastid. It is found in the chloroplast thylakoid membrane. It carries out the reaction a plastoquinone + NADH + (n+1) H(+)(in) = a plastoquinol + NAD(+) + n H(+)(out). It catalyses the reaction a plastoquinone + NADPH + (n+1) H(+)(in) = a plastoquinol + NADP(+) + n H(+)(out). Functionally, NDH shuttles electrons from NAD(P)H:plastoquinone, via FMN and iron-sulfur (Fe-S) centers, to quinones in the photosynthetic chain and possibly in a chloroplast respiratory chain. The immediate electron acceptor for the enzyme in this species is believed to be plastoquinone. Couples the redox reaction to proton translocation, and thus conserves the redox energy in a proton gradient. The protein is NAD(P)H-quinone oxidoreductase subunit K, chloroplastic of Ceratophyllum demersum (Rigid hornwort).